We begin with the raw amino-acid sequence, 448 residues long: Putative sodium-coupled neutral amino acid transporter 11 (448 aa).

The disordered stretch occupies residues 1-20; it reads MESERSCLLSSHDAGKGGSS. 11 helical membrane-spanning segments follow: residues 22 to 42, 52 to 72, 94 to 114, 143 to 163, 165 to 185, 200 to 220, 246 to 266, 286 to 306, 324 to 344, 346 to 366, and 389 to 409; these read VSSA…IGLP, MGLL…ILLV, IGYI…MISY, FVIA…RDIA, LGKV…TVVV, AWVF…FALI, ISVG…YATF, TFGR…ECFV, SSHV…SLSY, CLGI…MFIF, and MILV…ALFP. Asparagine 425, asparagine 440, and asparagine 444 each carry an N-linked (GlcNAc...) asparagine glycan.

The protein belongs to the amino acid/polyamine transporter 2 family.

The protein resides in the membrane. In terms of biological role, putative sodium-dependent amino acid/proton antiporter. The polypeptide is Putative sodium-coupled neutral amino acid transporter 11 (slc38a11) (Danio rerio (Zebrafish)).